The primary structure comprises 685 residues: ATP-dependent zinc metalloprotease FTSH 8, chloroplastic (685 aa).

The N-terminal 37 residues, 1–37, are a transit peptide targeting the chloroplast; that stretch reads MAASSACLLGNGLSVYTTKQRFQKLGLDRTSKVTVVK. Residues 38-73 constitute a thylakoid transit peptide; the sequence is ASLDEKKHEGRRGFFKLLLGNAAAGVGLLASGNANA. Residues 38–161 lie on the Lumenal, thylakoid side of the membrane; that stretch reads ASLDEKKHEG…HNAQEDQGSP (124 aa). The chain crosses the membrane as a helical span at residues 162-182; sequence ILNLIGNLAFPVILIGGLFLL. At 183–685 the chain is on the stromal side; that stretch reads SRRSSGGMGG…STSTPTPASV (503 aa). ATP is bound at residue 260 to 267; it reads GPPGTGKT. Residue H481 coordinates Zn(2+). E482 is an active-site residue. Positions 485 and 559 each coordinate Zn(2+).

In the N-terminal section; belongs to the AAA ATPase family. This sequence in the C-terminal section; belongs to the peptidase M41 family. Heterohexamers with FTSH1, FTSH2 and FTSH5. May also form homooligomers. Zn(2+) serves as cofactor. Expressed in cotyledons, cauline and rosette leaves, stems, sepals, flovers and siliques. Very low in roots.

It localises to the plastid. It is found in the chloroplast thylakoid membrane. In terms of biological role, part of a complex that function as an ATP-dependent zinc metallopeptidase. Involved in the thylakoid formation and in the removal of damaged D1 in the photosystem II, preventing cell death under high-intensity light conditions. This is ATP-dependent zinc metalloprotease FTSH 8, chloroplastic (FTSH8) from Arabidopsis thaliana (Mouse-ear cress).